The primary structure comprises 65 residues: Small ribosomal subunit protein uS10 (65 aa).

The protein belongs to the universal ribosomal protein uS10 family. In terms of assembly, part of the 30S ribosomal subunit.

Functionally, involved in the binding of tRNA to the ribosomes. The sequence is that of Small ribosomal subunit protein uS10 (rps10) from Desulfurococcus mucosus (Desulfurococcus mobilis).